A 243-amino-acid chain; its full sequence is Glucosamine-6-phosphate deaminase (243 aa).

Residue D67 is the Proton acceptor; for enolization step of the active site. N137 serves as the catalytic For ring-opening step. H139 functions as the Proton acceptor; for ring-opening step in the catalytic mechanism. Residue E144 is the For ring-opening step of the active site.

This sequence belongs to the glucosamine/galactosamine-6-phosphate isomerase family. NagB subfamily.

The catalysed reaction is alpha-D-glucosamine 6-phosphate + H2O = beta-D-fructose 6-phosphate + NH4(+). The protein operates within amino-sugar metabolism; N-acetylneuraminate degradation; D-fructose 6-phosphate from N-acetylneuraminate: step 5/5. Its function is as follows. Catalyzes the reversible isomerization-deamination of glucosamine 6-phosphate (GlcN6P) to form fructose 6-phosphate (Fru6P) and ammonium ion. This chain is Glucosamine-6-phosphate deaminase, found in Staphylococcus epidermidis (strain ATCC 35984 / DSM 28319 / BCRC 17069 / CCUG 31568 / BM 3577 / RP62A).